Here is a 333-residue protein sequence, read N- to C-terminus: DNA-directed RNA polymerase subunit alpha (333 aa).

The segment at M1 to K234 is alpha N-terminal domain (alpha-NTD). An alpha C-terminal domain (alpha-CTD) region spans residues I248–A333.

Belongs to the RNA polymerase alpha chain family. Homodimer. The RNAP catalytic core consists of 2 alpha, 1 beta, 1 beta' and 1 omega subunit. When a sigma factor is associated with the core the holoenzyme is formed, which can initiate transcription.

It catalyses the reaction RNA(n) + a ribonucleoside 5'-triphosphate = RNA(n+1) + diphosphate. Its function is as follows. DNA-dependent RNA polymerase catalyzes the transcription of DNA into RNA using the four ribonucleoside triphosphates as substrates. This Ectopseudomonas mendocina (strain ymp) (Pseudomonas mendocina) protein is DNA-directed RNA polymerase subunit alpha.